The sequence spans 257 residues: UPF0246 protein RSc2009 (257 aa).

It belongs to the UPF0246 family.

This Ralstonia nicotianae (strain ATCC BAA-1114 / GMI1000) (Ralstonia solanacearum) protein is UPF0246 protein RSc2009.